Consider the following 330-residue polypeptide: G-protein coupled receptor 3 (330 aa).

At 1–42 the chain is on the extracellular side; the sequence is MMWGAGSPLAWLSAGSGNVNVSSVGPAEGPTGPAAPLPSPKA. The N-linked (GlcNAc...) asparagine glycan is linked to Asn-20. The helical transmembrane segment at 43 to 62 threads the bilayer; sequence WDVVLCISGTLVSCENALVV. The Cytoplasmic portion of the chain corresponds to 63 to 74; the sequence is AIIVGTPAFRAP. Residues 75–98 form a helical membrane-spanning segment; it reads MFLLVGSLAVADLLAGLGLVLHFA. Residues 99 to 110 lie on the Extracellular side of the membrane; that stretch reads AVFCIGSAEMSL. Residues 111 to 132 traverse the membrane as a helical segment; that stretch reads VLVGVLAMAFTASIGSLLAITV. Residues 133–153 are Cytoplasmic-facing; it reads DRYLSLYNALTYYSETTVTRT. A helical membrane pass occupies residues 154-173; that stretch reads YVMLALVWGGALGLGLLPVL. Over 174 to 198 the chain is Extracellular; it reads AWNCLDGLTTCGVVYPLSKNHLVVL. A helical membrane pass occupies residues 199–217; the sequence is AIAFFMVFGIMLQLYAQIC. Over 218–245 the chain is Cytoplasmic; it reads RIVCRHAQQIALQRHLLPASHYVATRKG. A helical membrane pass occupies residues 246-272; the sequence is IATLAVVLGAFAACWLPFTVYCLLGDA. Residues 273–277 are Extracellular-facing; it reads HSPPL. The chain crosses the membrane as a helical span at residues 278–299; it reads YTYLTLLPATYNSMINPIIYAF. Residues 300–330 are Cytoplasmic-facing; the sequence is RNQDVQKVLWAVCCCCSSSKIPFRSRSPSDV. Cys-313 is lipidated: S-palmitoyl cysteine. 3 positions are modified to phosphoserine: Ser-324, Ser-326, and Ser-328.

Belongs to the G-protein coupled receptor 1 family. In terms of tissue distribution, expressed predominantly in the central nervous system, and at low levels in the lung, kidney, testis, ovary and eye. Highly expressed in regions of the brain implicated in the Alzheimer disease.

It is found in the cell membrane. Functionally, constitutively active G-protein coupled receptor that maintains high 3'-5'-cyclic adenosine monophosphate (cAMP) levels that a plays a role in serveral processes including meiotic arrest in oocytes or neuronal development via activation of numerous intracellular signaling pathways. Acts as an essential activator of thermogenic adipocytes and drives thermogenesis via its intrinsic G(s)-coupling activity without the requirement of a ligand. Has a potential role in modulating a number of brain functions, including behavioral responses to stress, amyloid-beta peptide generation in neurons. Stimulates neurite outgrowth in cerebellar granular neurons modulated via PKA, ERK, and most strongly PI3K-mediated signaling pathways. The chain is G-protein coupled receptor 3 (GPR3) from Homo sapiens (Human).